Reading from the N-terminus, the 1330-residue chain is ESX-3 secretion system protein EccC3 (1330 aa).

2 helical membrane passes run 43 to 63 and 65 to 85; these read LPYLIGILIVGMIVALVATGM and VISPQTLFFPFVLLLAATALY. 3 consecutive FtsK domains span residues 456-662, 811-1000, and 1090-1280; these read GEPL…SVSR, RDPL…RDSN, and LAPV…ADSG. ATP-binding positions include 479–486, 829–836, and 1107–1114; these read GMTGSGKS, GGPKSGKS, and GDARSGKT.

In terms of assembly, part of the ESX-3 / type VII secretion system (T7SS), which is composed of cytosolic and membrane components. The ESX-3 membrane complex is composed of EccB3, EccC3, EccD3 and EccE3.

The protein localises to the cell inner membrane. Functionally, part of the ESX-3 specialized secretion system, which is important for iron and zinc uptake or homeostasis. In Mycobacterium tuberculosis (strain CDC 1551 / Oshkosh), this protein is ESX-3 secretion system protein EccC3.